The sequence spans 280 residues: 2,3,4,5-tetrahydropyridine-2,6-dicarboxylate N-succinyltransferase (280 aa).

The protein belongs to the transferase hexapeptide repeat family.

Its subcellular location is the cytoplasm. The catalysed reaction is (S)-2,3,4,5-tetrahydrodipicolinate + succinyl-CoA + H2O = (S)-2-succinylamino-6-oxoheptanedioate + CoA. Its pathway is amino-acid biosynthesis; L-lysine biosynthesis via DAP pathway; LL-2,6-diaminopimelate from (S)-tetrahydrodipicolinate (succinylase route): step 1/3. The chain is 2,3,4,5-tetrahydropyridine-2,6-dicarboxylate N-succinyltransferase from Methylorubrum populi (strain ATCC BAA-705 / NCIMB 13946 / BJ001) (Methylobacterium populi).